The sequence spans 270 residues: MQITPENTWAAVKAIRSRAPLIHNITNYVVMNSTANALLALGASPVMAHAQEEVEEMVGIAQALVVNIGTLSPSWVRAMASAALKAADRGIPIILDPVGAGATAYRTRTAFQLLETVSPTIIRGNASEILAFESVETMETRGVDSTELSQNAVDAGRRLNDSYGSTVCISGETDFIIGDRAILGIRNGHPLMTRVTGLGCTASALCGAFAAVNSSFTLAAAQAMAVMGIAGEMAAEISPGPGSLQLHFLDILYRLTEEDIARRLRIVAGE.

Substrate is bound at residue M47. 2 residues coordinate ATP: R123 and S170. A substrate-binding site is contributed by G197.

The protein belongs to the Thz kinase family. It depends on Mg(2+) as a cofactor.

The catalysed reaction is 5-(2-hydroxyethyl)-4-methylthiazole + ATP = 4-methyl-5-(2-phosphooxyethyl)-thiazole + ADP + H(+). It participates in cofactor biosynthesis; thiamine diphosphate biosynthesis; 4-methyl-5-(2-phosphoethyl)-thiazole from 5-(2-hydroxyethyl)-4-methylthiazole: step 1/1. Catalyzes the phosphorylation of the hydroxyl group of 4-methyl-5-beta-hydroxyethylthiazole (THZ). The chain is Hydroxyethylthiazole kinase from Syntrophus aciditrophicus (strain SB).